A 337-amino-acid polypeptide reads, in one-letter code: ATP-dependent (S)-NAD(P)H-hydrate dehydratase (337 aa).

Serine 6 is modified (phosphoserine). The YjeF C-terminal domain occupies 11–335 (IKLAQKRCIP…DRVGEVFAKL (325 aa)). Residues glycine 121 and 182–188 (NVVEFKR) contribute to the (6S)-NADPHX site. ATP-binding positions include 218–222 (KGQSD) and 240–249 (GSNKRVGGQG). Residues 224 to 246 (IFSPDSEKDMLTNSEEGSNKRVG) are disordered. A (6S)-NADPHX-binding site is contributed by aspartate 250.

The protein belongs to the NnrD/CARKD family. Mg(2+) serves as cofactor.

Its subcellular location is the cytoplasm. It catalyses the reaction (6S)-NADHX + ATP = ADP + phosphate + NADH + H(+). It carries out the reaction (6S)-NADPHX + ATP = ADP + phosphate + NADPH + H(+). Functionally, catalyzes the dehydration of the S-form of NAD(P)HX at the expense of ATP, which is converted to ADP. Together with NAD(P)HX epimerase, which catalyzes the epimerization of the S- and R-forms, the enzyme allows the repair of both epimers of NAD(P)HX, a damaged form of NAD(P)H that is a result of enzymatic or heat-dependent hydration. The polypeptide is ATP-dependent (S)-NAD(P)H-hydrate dehydratase (Saccharomyces cerevisiae (strain ATCC 204508 / S288c) (Baker's yeast)).